Reading from the N-terminus, the 583-residue chain is Phosphoglucomutase, cytoplasmic 2 (583 aa).

Positions 25 and 124 each coordinate alpha-D-glucose 1,6-bisphosphate. The active-site Phosphoserine intermediate is S124. Mg(2+)-binding residues include S124, D300, D302, and D304. Residue S124 is modified to Phosphoserine. Positions 304, 305, 368, 387, 389, and 400 each coordinate alpha-D-glucose 1,6-bisphosphate.

Belongs to the phosphohexose mutase family. In terms of assembly, monomer. The cofactor is Mg(2+).

It is found in the cytoplasm. The catalysed reaction is alpha-D-glucose 1-phosphate = alpha-D-glucose 6-phosphate. The enzyme catalyses O-phospho-L-seryl-[protein] + alpha-D-glucose 1-phosphate = alpha-D-glucose 1,6-bisphosphate + L-seryl-[protein]. It carries out the reaction alpha-D-glucose 1,6-bisphosphate + L-seryl-[protein] = O-phospho-L-seryl-[protein] + alpha-D-glucose 6-phosphate. In terms of biological role, catalyzes the reversible isomerization of alpha-D-glucose 1-phosphate to alpha-D-glucose 6-phosphate. The mechanism proceeds via the intermediate compound alpha-D-glucose 1,6-bisphosphate. This enzyme participates in both the breakdown and synthesis of glucose. In Zea mays (Maize), this protein is Phosphoglucomutase, cytoplasmic 2.